We begin with the raw amino-acid sequence, 585 residues long: Probable inactive serine/threonine-protein kinase slob1 (585 aa).

Residues 21–82 (DQSSLECNDC…LCRSCNNSFE (62 aa)) form an FYVE-type zinc finger. Zn(2+) is bound by residues C27, C30, C43, C46, C51, C54, C74, and C77. A Protein kinase domain is found at 108–478 (SKPLQDIGHT…STSLLNNSFN (371 aa)). Composition is skewed to low complexity over residues 426–456 (ISKL…NISS) and 466–503 (LPSS…ISSP). Residues 426-585 (ISKLSSSSSN…SLKPSSTKKK (160 aa)) are disordered. Pro residues predominate over residues 513–532 (TPPPPPPPPKSAPPPPPPPS). Residues 533–542 (SSKLPPSSSS) are compositionally biased toward low complexity. Residues 542 to 562 (SRNSLLESIRNADNAKKLKKT) enclose the WH2 domain.

The protein belongs to the protein kinase superfamily. Ser/Thr protein kinase family.

This is Probable inactive serine/threonine-protein kinase slob1 (slob1) from Dictyostelium discoideum (Social amoeba).